We begin with the raw amino-acid sequence, 139 residues long: Crossover junction endodeoxyribonuclease Hje (139 aa).

The Mg(2+) site is built by Glu10, Asp39, and Glu52.

The protein belongs to the Holliday junction resolvase Hjc family. Hje subfamily. Homodimer. Requires Mg(2+) as cofactor.

The enzyme catalyses Endonucleolytic cleavage at a junction such as a reciprocal single-stranded crossover between two homologous DNA duplexes (Holliday junction).. Functionally, a structure-specific endonuclease that resolves Holliday junction (HJ) intermediates during genetic recombination. Acts only on 4-way DNA junctions in a sequence non-specific manner; introduces paired nicks in opposing strands 2 bases 3' of the point of strand exchange only on continuous strands of 4-way junction DNA. Cleaves both mobile and immobile junctions. Redundant function with Holliday junction resolvase Hjc. This is Crossover junction endodeoxyribonuclease Hje from Sulfolobus acidocaldarius (strain ATCC 33909 / DSM 639 / JCM 8929 / NBRC 15157 / NCIMB 11770).